A 355-amino-acid polypeptide reads, in one-letter code: Guanine nucleotide-binding protein G(i) subunit alpha-2 (355 aa).

The N-myristoyl glycine moiety is linked to residue G2. Residue C3 is the site of S-palmitoyl cysteine attachment. The region spanning 32–355 is the G-alpha domain; it reads REVKLLLLGA…KNNLKDCGLF (324 aa). The segment at 35 to 48 is G1 motif; it reads KLLLLGAGESGKST. GTP-binding positions include 40 to 47, 176 to 182, 201 to 205, 270 to 273, and A327; these read GAGESGKS, LRTRVKT, DVGGQ, and NKKD. 2 residues coordinate Mg(2+): S47 and T182. The segment at 174-182 is G2 motif; the sequence is DVLRTRVKT. Residues 197–206 form a G3 motif region; sequence FKMFDVGGQR. The segment at 266–273 is G4 motif; sequence ILFLNKKD. Residues 325–330 form a G5 motif region; it reads TCATDT.

This sequence belongs to the G-alpha family. G(i/o/t/z) subfamily. In terms of assembly, g proteins are composed of 3 units; alpha, beta and gamma. The alpha chain contains the guanine nucleotide binding site.

It localises to the cytoplasm. The protein resides in the cytoskeleton. It is found in the microtubule organizing center. The protein localises to the centrosome. Its subcellular location is the cell membrane. Its function is as follows. Guanine nucleotide-binding proteins (G proteins) are involved as modulators or transducers in various transmembrane signaling systems. The G(i) proteins are involved in hormonal regulation of adenylate cyclase: they inhibit the cyclase in response to beta-adrenergic stimuli. May play a role in cell division. This is Guanine nucleotide-binding protein G(i) subunit alpha-2 (GNAI2) from Gallus gallus (Chicken).